A 273-amino-acid chain; its full sequence is NAD-dependent protein deacylase (273 aa).

The region spanning 20 to 272 (RERLRQRIFF…PEFVEKLLKG (253 aa)) is the Deacetylase sirtuin-type domain. NAD(+) is bound at residue 48–67 (GAGISAESGIRTFRAADGLW). Positions 92 and 95 each coordinate substrate. 129–132 (QNID) contacts NAD(+). The active-site Proton acceptor is the H147. Zn(2+) is bound by residues C155 and C174. Residues 214 to 216 (GTS), 240 to 242 (NLE), and A258 contribute to the NAD(+) site.

It belongs to the sirtuin family. Class III subfamily. Zn(2+) serves as cofactor.

The protein localises to the cytoplasm. It carries out the reaction N(6)-acetyl-L-lysyl-[protein] + NAD(+) + H2O = 2''-O-acetyl-ADP-D-ribose + nicotinamide + L-lysyl-[protein]. The catalysed reaction is N(6)-succinyl-L-lysyl-[protein] + NAD(+) + H2O = 2''-O-succinyl-ADP-D-ribose + nicotinamide + L-lysyl-[protein]. It catalyses the reaction N(6)-(2-hydroxyisobutanoyl)-L-lysyl-[protein] + NAD(+) + H2O = 2''-O-(2-hydroxyisobutanoyl)-ADP-D-ribose + nicotinamide + L-lysyl-[protein]. Its function is as follows. NAD-dependent lysine deacetylase that specifically removes acetyl groups on target proteins. Also acts as a protein-lysine deacylase by mediating protein desuccinylation and de-2-hydroxyisobutyrylation. Modulates the activities of several proteins which are inactive in their acylated form. In Escherichia coli O6:H1 (strain CFT073 / ATCC 700928 / UPEC), this protein is NAD-dependent protein deacylase.